The following is a 132-amino-acid chain: ATP synthase epsilon chain (132 aa).

Belongs to the ATPase epsilon chain family. As to quaternary structure, F-type ATPases have 2 components, CF(1) - the catalytic core - and CF(0) - the membrane proton channel. CF(1) has five subunits: alpha(3), beta(3), gamma(1), delta(1), epsilon(1). CF(0) has three main subunits: a, b and c.

It is found in the cell inner membrane. Its function is as follows. Produces ATP from ADP in the presence of a proton gradient across the membrane. This Aquifex aeolicus (strain VF5) protein is ATP synthase epsilon chain (atpC).